The primary structure comprises 234 residues: Phosphoribosylaminoimidazole-succinocarboxamide synthase (234 aa).

This sequence belongs to the SAICAR synthetase family.

It carries out the reaction 5-amino-1-(5-phospho-D-ribosyl)imidazole-4-carboxylate + L-aspartate + ATP = (2S)-2-[5-amino-1-(5-phospho-beta-D-ribosyl)imidazole-4-carboxamido]succinate + ADP + phosphate + 2 H(+). It participates in purine metabolism; IMP biosynthesis via de novo pathway; 5-amino-1-(5-phospho-D-ribosyl)imidazole-4-carboxamide from 5-amino-1-(5-phospho-D-ribosyl)imidazole-4-carboxylate: step 1/2. The polypeptide is Phosphoribosylaminoimidazole-succinocarboxamide synthase (Streptococcus pyogenes serotype M18 (strain MGAS8232)).